Consider the following 1122-residue polypeptide: AP-4 complex subunit epsilon-1 (1122 aa).

Ser699 carries the phosphoserine modification. 2 stretches are compositionally biased toward basic and acidic residues: residues 714–728 (YLPKKESGTGDKPEA) and 745–760 (TTRKDQAQGHIPSTEE). Disordered regions lie at residues 714-760 (YLPK…STEE) and 797-861 (SKLK…AEKL). Residues 726-1122 (PEASHVPAEG…CHCQKVMQTS (397 aa)) form an interaction with TEPSIN region. Over residues 841 to 853 (ELSSELFRSESLS) the composition is skewed to low complexity. Ser851 is subject to Phosphoserine.

The protein belongs to the adaptor complexes large subunit family. Adaptor protein complex 4 (AP-4) is a heterotetramer composed of two large adaptins (epsilon-type subunit AP4E1 and beta-type subunit AP4B1), a medium adaptin (mu-type subunit AP4M1) and a small adaptin (sigma-type AP4S1). Interacts with TEPSIN. Interacts with GRIA2; probably indirect it mediates the somatodendritic localization of GRIA2 in neurons.

It localises to the golgi apparatus. It is found in the trans-Golgi network membrane. In terms of biological role, component of the adaptor protein complex 4 (AP-4). Adaptor protein complexes are vesicle coat components involved both in vesicle formation and cargo selection. They control the vesicular transport of proteins in different trafficking pathways. AP-4 forms a non clathrin-associated coat on vesicles departing the trans-Golgi network (TGN) and may be involved in the targeting of proteins from the trans-Golgi network (TGN) to the endosomal-lysosomal system. It is also involved in protein sorting to the basolateral membrane in epithelial cells and the proper asymmetric localization of somatodendritic proteins in neurons. AP-4 is involved in the recognition and binding of tyrosine-based sorting signals found in the cytoplasmic part of cargos, but may also recognize other types of sorting signal. This chain is AP-4 complex subunit epsilon-1, found in Mus musculus (Mouse).